A 311-amino-acid chain; its full sequence is 2-methoxy-6-polyprenyl-1,4-benzoquinol methylase, mitochondrial (311 aa).

The N-terminal 29 residues, 1–29 (MAAGLCPGRALLSRRGGALWALLGTARGR), are a transit peptide targeting the mitochondrion. S-adenosyl-L-methionine is bound by residues Thr100, Asp155, and 183–184 (NA).

Belongs to the class I-like SAM-binding methyltransferase superfamily. MenG/UbiE family. Component of a multi-subunit COQ enzyme complex, composed of at least COQ3, COQ4, COQ5, COQ6, COQ7 and COQ9.

It localises to the mitochondrion inner membrane. The catalysed reaction is a 2-methoxy-6-(all-trans-polyprenyl)benzene-1,4-diol + S-adenosyl-L-methionine = a 5-methoxy-2-methyl-3-(all-trans-polyprenyl)benzene-1,4-diol + S-adenosyl-L-homocysteine + H(+). Its pathway is cofactor biosynthesis; ubiquinone biosynthesis. Methyltransferase required for the conversion of 2-polyprenyl-6-methoxy-1,4-benzoquinol (DDMQH2) to 2-polyprenyl-3-methyl-6-methoxy-1,4-benzoquinol (DMQH2). In Gallus gallus (Chicken), this protein is 2-methoxy-6-polyprenyl-1,4-benzoquinol methylase, mitochondrial.